A 355-amino-acid polypeptide reads, in one-letter code: D-alanine--D-alanine ligase (355 aa).

The region spanning 143–350 (KIIFSNLKIP…IEQLVAKLVD (208 aa)) is the ATP-grasp domain. ATP is bound at residue 178–233 (LKKLNFPVFVKPSNSGSSLGISKVINKSEIIPALEKARGIDPSILIEEGLEVREIE). Residues D303, E317, and N319 each coordinate Mg(2+).

Belongs to the D-alanine--D-alanine ligase family. It depends on Mg(2+) as a cofactor. Mn(2+) serves as cofactor.

Its subcellular location is the cytoplasm. It carries out the reaction 2 D-alanine + ATP = D-alanyl-D-alanine + ADP + phosphate + H(+). Its pathway is cell wall biogenesis; peptidoglycan biosynthesis. Functionally, cell wall formation. This Prochlorococcus marinus (strain AS9601) protein is D-alanine--D-alanine ligase.